We begin with the raw amino-acid sequence, 790 residues long: Lon protease (790 aa).

Residues 23–220 (LPIMPIFHTV…EITLIVNHQL (198 aa)) enclose the Lon N-terminal domain. 372-379 (GPPGTGKT) serves as a coordination point for ATP. The Lon proteolytic domain maps to 608–789 (ISKPGIAMGL…REVLNIALSR (182 aa)). Catalysis depends on residues serine 695 and lysine 738.

This sequence belongs to the peptidase S16 family. In terms of assembly, homohexamer. Organized in a ring with a central cavity.

Its subcellular location is the cytoplasm. The enzyme catalyses Hydrolysis of proteins in presence of ATP.. ATP-dependent serine protease that mediates the selective degradation of mutant and abnormal proteins as well as certain short-lived regulatory proteins. Required for cellular homeostasis and for survival from DNA damage and developmental changes induced by stress. Degrades polypeptides processively to yield small peptide fragments that are 5 to 10 amino acids long. Binds to DNA in a double-stranded, site-specific manner. The protein is Lon protease of Syntrophus aciditrophicus (strain SB).